Here is a 121-residue protein sequence, read N- to C-terminus: UPF0738 protein RBAM_011600 (121 aa).

The protein belongs to the UPF0738 family.

This is UPF0738 protein RBAM_011600 from Bacillus velezensis (strain DSM 23117 / BGSC 10A6 / LMG 26770 / FZB42) (Bacillus amyloliquefaciens subsp. plantarum).